We begin with the raw amino-acid sequence, 147 residues long: Leech anti-platelet protein (147 aa).

An N-terminal signal peptide occupies residues methionine 1–alanine 21. Positions alanine 21–arginine 71 are disordered. The segment covering glutamine 22–glycine 41 has biased composition (acidic residues). 3 cysteine pairs are disulfide-bonded: cysteine 67/cysteine 145, cysteine 92/cysteine 117, and cysteine 96/cysteine 105.

The N-terminus is blocked. As to expression, expressed by salivary glands.

The protein localises to the secreted. Its function is as follows. Inhibits collagen-stimulated platelet aggregation (IC(50)=60 nM), dense granule release and serotonin release. Does not inhibit platelet aggregation induced by ADP, arachidonic acid, and thrombin. This is Leech anti-platelet protein from Haementeria officinalis (Mexican leech).